The following is a 335-amino-acid chain: Pharynx and intestine in excess protein 1 (335 aa).

Residue Lys68 forms a Glycyl lysine isopeptide (Lys-Gly) (interchain with G-Cter in SUMO) linkage. The C3H1-type 1 zinc finger occupies Glu98–Asp126. Basic and acidic residues predominate over residues Val130 to Val156. Residues Val130–Gln188 are disordered. Polar residues-rich tracts occupy residues Thr158–Ala167 and Pro177–Arg187. The C3H1-type 2 zinc finger occupies Ser184 to Gln211. A required for inhibition of Ser-2 phosphorylation region spans residues Met288–Thr291.

As to quaternary structure, interacts with hda-1, let-418 and mep-1. Interacts (via C terminus) with cit-1.1 (via C terminus). Sumoylated in adult germ cells.

Its subcellular location is the nucleus. It localises to the cytoplasm. The protein resides in the cytoskeleton. It is found in the microtubule organizing center. The protein localises to the centrosome. Its subcellular location is the spindle. It localises to the cytoplasmic granule. Maternally provided pie-1 is required for germline cell fate determination. Functions as a repressor of RNA polymerase II-dependent gene expression in the developing germline. Required for expression of nos-2 in P4 germline blastomere cells. Inhibits the histone deacetylase activity of hda-1. Represses transcriptional activation of cdk-9 and cit-1.1, which are members of the P-TEFb complex. Acts redundantly with gei-17 to promote piRNA-mediated silencing and fertility in adult germline. Promotes the sumoylation of hda-1 in adult animals but not in embryos thereby regulating its interaction with mep-1. The protein is Pharynx and intestine in excess protein 1 of Caenorhabditis elegans.